A 465-amino-acid chain; its full sequence is MSISVTSHNDVSKLERIGAHSHIKGIGLNDNLEPKESSQGMVGQVKARRAAGVILKMIQEGRIAGRAILMAGPPSTGKTAIAMGMAQSLGSDTPFVTLSASEVYSLEMSKTEALLQALRKSIGVRIKEETEIIEGEVVEVQIDRSITGGNKQGKLTIRSTDMETVYDLGTKMIDSLTKEKVLAGDVISIDKSVGRVTKLGRSFSRARDYDAMGADTRFVQCPQGEIQKRKEVVHTVSLHDIDVINSRTQGFLALFSGDTGEIKPEVREQINTKVSEWREEGKAEIVPGVLFVDEVHMLDIECFSFFNRALEDDLAPIVIMASNRGITRIRGTNYRSPHGIPVDLLDRMLIISTLPYSHEEVKEILKIRCQEEDVDMEPSALDYLSTIGQETSLRYALLLISSSNQVALKRKSATIEESDIRRVYELFLDQKRSVEYLEEYGKNYITENEWSASGAQDNAVAMQED.

72 to 79 (GPPSTGKT) contributes to the ATP binding site.

This sequence belongs to the RuvB family. May form heterododecamers with RVB1. Component of the SWR1 chromatin remodeling complex, the INO80 chromatin remodeling complex, and of the R2TP complex. Interacts with dil1.

The protein localises to the nucleus. It catalyses the reaction ATP + H2O = ADP + phosphate + H(+). DNA helicase which participates in several chromatin remodeling complexes, including the SWR1 and the INO80 complexes. The SWR1 complex mediates the ATP-dependent exchange of histone H2A for the H2A variant HZT1 leading to transcriptional regulation of selected genes by chromatin remodeling. The INO80 complex remodels chromatin by shifting nucleosomes and is involved in DNA repair. Also involved in pre-rRNA processing. This Schizosaccharomyces pombe (strain 972 / ATCC 24843) (Fission yeast) protein is RuvB-like helicase 2 (rvb2).